The chain runs to 560 residues: Dihydroxy-acid dehydratase (560 aa).

Cysteine 52 is a binding site for [2Fe-2S] cluster. Aspartate 84 serves as a coordination point for Mg(2+). Cysteine 125 contributes to the [2Fe-2S] cluster binding site. Aspartate 126 and lysine 127 together coordinate Mg(2+). At lysine 127 the chain carries N6-carboxylysine. Position 197 (cysteine 197) interacts with [2Fe-2S] cluster. Glutamate 448 is a Mg(2+) binding site. Serine 474 functions as the Proton acceptor in the catalytic mechanism.

The protein belongs to the IlvD/Edd family. Homodimer. The cofactor is [2Fe-2S] cluster. Mg(2+) serves as cofactor.

The catalysed reaction is (2R)-2,3-dihydroxy-3-methylbutanoate = 3-methyl-2-oxobutanoate + H2O. It carries out the reaction (2R,3R)-2,3-dihydroxy-3-methylpentanoate = (S)-3-methyl-2-oxopentanoate + H2O. It functions in the pathway amino-acid biosynthesis; L-isoleucine biosynthesis; L-isoleucine from 2-oxobutanoate: step 3/4. It participates in amino-acid biosynthesis; L-valine biosynthesis; L-valine from pyruvate: step 3/4. Functionally, functions in the biosynthesis of branched-chain amino acids. Catalyzes the dehydration of (2R,3R)-2,3-dihydroxy-3-methylpentanoate (2,3-dihydroxy-3-methylvalerate) into 2-oxo-3-methylpentanoate (2-oxo-3-methylvalerate) and of (2R)-2,3-dihydroxy-3-methylbutanoate (2,3-dihydroxyisovalerate) into 2-oxo-3-methylbutanoate (2-oxoisovalerate), the penultimate precursor to L-isoleucine and L-valine, respectively. The chain is Dihydroxy-acid dehydratase from Francisella tularensis subsp. tularensis (strain WY96-3418).